Consider the following 409-residue polypeptide: Na(+)-translocating NADH-quinone reductase subunit F (409 aa).

The helical transmembrane segment at F5–I25 threads the bilayer. Positions G34–V128 constitute a 2Fe-2S ferredoxin-type domain. [2Fe-2S] cluster is bound by residues C71, C77, C80, and C112. The FAD-binding FR-type domain maps to V131 to K271.

It belongs to the NqrF family. As to quaternary structure, composed of six subunits; NqrA, NqrB, NqrC, NqrD, NqrE and NqrF. It depends on [2Fe-2S] cluster as a cofactor. FAD is required as a cofactor.

The protein localises to the cell inner membrane. The catalysed reaction is a ubiquinone + n Na(+)(in) + NADH + H(+) = a ubiquinol + n Na(+)(out) + NAD(+). NQR complex catalyzes the reduction of ubiquinone-1 to ubiquinol by two successive reactions, coupled with the transport of Na(+) ions from the cytoplasm to the periplasm. The first step is catalyzed by NqrF, which accepts electrons from NADH and reduces ubiquinone-1 to ubisemiquinone by a one-electron transfer pathway. This is Na(+)-translocating NADH-quinone reductase subunit F from Actinobacillus succinogenes (strain ATCC 55618 / DSM 22257 / CCUG 43843 / 130Z).